The primary structure comprises 303 residues: E3 ubiquitin-protein ligase SINA-like 3 (303 aa).

Residues 1 to 30 form a disordered region; that stretch reads MENITNNSERSLDRPKRQRPVSMENVGGTA. The segment at 49 to 85 adopts an RING-type zinc-finger fold; it reads CPICYHKLGAPIYQCDNGHIACSSCCKKVKYKCPYCS. The segment at 99–286 is SBD; sequence IVEAVVVSCP…MSIPYYLLDE (188 aa). An SIAH-type zinc finger spans residues 102 to 162; that stretch reads AVVVSCPNAK…LYRHYHAEHK (61 aa). Cys-107, Cys-114, His-128, Cys-132, Cys-139, Cys-144, His-156, and His-161 together coordinate Zn(2+).

The protein belongs to the SINA (Seven in absentia) family.

It carries out the reaction S-ubiquitinyl-[E2 ubiquitin-conjugating enzyme]-L-cysteine + [acceptor protein]-L-lysine = [E2 ubiquitin-conjugating enzyme]-L-cysteine + N(6)-ubiquitinyl-[acceptor protein]-L-lysine.. It participates in protein modification; protein ubiquitination. Its function is as follows. E3 ubiquitin-protein ligase that mediates ubiquitination and subsequent proteasomal degradation of target proteins. E3 ubiquitin ligases accept ubiquitin from an E2 ubiquitin-conjugating enzyme in the form of a thioester and then directly transfers the ubiquitin to targeted substrates. It probably triggers the ubiquitin-mediated degradation of different substrates. The polypeptide is E3 ubiquitin-protein ligase SINA-like 3 (Arabidopsis thaliana (Mouse-ear cress)).